Consider the following 623-residue polypeptide: Hemagglutinin component HA-70 type D (623 aa).

Botulinum toxins are produced as large progenitor toxins of 12S (M toxin, about 280 kDa) and 16S (L toxin, about 650 kDa). M toxin consists of a non-toxic, non-hemagglutinin component (NTNHA) and the neurotoxin (BoNT/D). L toxin consists of the M toxin and the 3 hemagglutinin (HA) subcomponents of 70, 33, and 17 kDa. The stoichiometry of the whole complex has been modeled as one BoNT/D, one NTNHA, three HA-70, six HA-33 and three HA-17. HA-33 and HA-17 crystallize as a heterotrimer with two HA-33 and one HA-17. Post-translationally, limited treatment of L toxin with pepsin or trypsin produces shorter HA-70 proteins (called HA-55, HA-23 and HA-22) sometimes observed in vivo in other strains of type C and D botulinum toxin preparations.

It localises to the secreted. The hemagglutinin (HA) component of the progenitor toxin protects the structural integrity of the neurotoxin; may increase internalization of the neurotoxin into the bloodstream of the host. Involved in binding to the small intestine through interactions with glycolipids and glycoproteins containing sialic acid moieties. Erythrocyte agglutination only occurs when the entire complex is assembled. This HA subunit probably connects toxin/NTNHA to HA-33 and HA-17, the other components of the HA complex, and it may also protect the M toxin from proteolysis upon secretion. This chain is Hemagglutinin component HA-70 type D, found in Clostridium botulinum D phage (Clostridium botulinum D bacteriophage).